The primary structure comprises 442 residues: 5'-deoxyadenosine deaminase (442 aa).

The Zn(2+) site is built by His72 and His74. 2 residues coordinate substrate: Glu101 and His193. Position 220 (His220) interacts with Zn(2+). 2 residues coordinate substrate: Glu223 and Asp309. Asp309 is a Zn(2+) binding site.

The protein belongs to the metallo-dependent hydrolases superfamily. MTA/SAH deaminase family. Homotetramer. Zn(2+) is required as a cofactor.

The enzyme catalyses 5'-deoxyadenosine + H2O + H(+) = 5'-deoxyinosine + NH4(+). It catalyses the reaction S-adenosyl-L-homocysteine + H2O + H(+) = S-inosyl-L-homocysteine + NH4(+). The catalysed reaction is S-methyl-5'-thioadenosine + H2O + H(+) = S-methyl-5'-thioinosine + NH4(+). It carries out the reaction adenosine + H2O + H(+) = inosine + NH4(+). The protein operates within amino-acid biosynthesis; S-adenosyl-L-methionine biosynthesis. In terms of biological role, catalyzes the deamination of three SAM-derived enzymatic products, namely 5'-deoxyadenosine, S-adenosyl-L-homocysteine, and 5'-methylthioadenosine, to produce the inosine analogs. Can also deaminate adenosine. The preferred substrate for this enzyme is 5'-deoxyadenosine, but all these substrates are efficiently deaminated. Likely functions in a S-adenosyl-L-methionine (SAM) recycling pathway from S-adenosyl-L-homocysteine (SAH) produced from SAM-dependent methylation reactions. May also be involved in the recycling of 5'-deoxyadenosine, whereupon the 5'-deoxyribose moiety of 5'-deoxyinosine is further metabolized to deoxyhexoses used for the biosynthesis of aromatic amino acids in methanogens. This is 5'-deoxyadenosine deaminase from Methanoregula boonei (strain DSM 21154 / JCM 14090 / 6A8).